A 165-amino-acid chain; its full sequence is Endoribonuclease YbeY (165 aa).

Residues His130, His134, and His140 each coordinate Zn(2+).

The protein belongs to the endoribonuclease YbeY family. It depends on Zn(2+) as a cofactor.

It localises to the cytoplasm. Single strand-specific metallo-endoribonuclease involved in late-stage 70S ribosome quality control and in maturation of the 3' terminus of the 16S rRNA. This Streptococcus agalactiae serotype Ia (strain ATCC 27591 / A909 / CDC SS700) protein is Endoribonuclease YbeY.